Consider the following 159-residue polypeptide: Glutamate-rich protein GrpA (159 aa).

The polypeptide is Glutamate-rich protein GrpA (grpA) (Alkalihalophilus pseudofirmus (strain ATCC BAA-2126 / JCM 17055 / OF4) (Bacillus pseudofirmus)).